Here is a 154-residue protein sequence, read N- to C-terminus: Endoribonuclease YbeY (154 aa).

Residues His113, His117, and His123 each coordinate Zn(2+).

This sequence belongs to the endoribonuclease YbeY family. Requires Zn(2+) as cofactor.

The protein localises to the cytoplasm. Single strand-specific metallo-endoribonuclease involved in late-stage 70S ribosome quality control and in maturation of the 3' terminus of the 16S rRNA. This chain is Endoribonuclease YbeY, found in Vibrio campbellii (strain ATCC BAA-1116).